Here is a 669-residue protein sequence, read N- to C-terminus: UvrABC system protein B (669 aa).

In terms of domain architecture, Helicase ATP-binding spans 26–414; sequence EGLEDGLAHQ…SGDVVEQVVR (389 aa). 39–46 is a binding site for ATP; it reads GVTGSGKT. Positions 92-115 match the Beta-hairpin motif; that stretch reads YYDYYQPEAYVPSSDTFIEKDASV. A Helicase C-terminal domain is found at 431-597; the sequence is QVDDLLSEIR…GLNKKINDIL (167 aa). Positions 629-664 constitute a UVR domain; that stretch reads ESKIRELEAKMYQHAQDLEFEQAASVRDQVQALREQ.

Belongs to the UvrB family. In terms of assembly, forms a heterotetramer with UvrA during the search for lesions. Interacts with UvrC in an incision complex.

The protein resides in the cytoplasm. Functionally, the UvrABC repair system catalyzes the recognition and processing of DNA lesions. A damage recognition complex composed of 2 UvrA and 2 UvrB subunits scans DNA for abnormalities. Upon binding of the UvrA(2)B(2) complex to a putative damaged site, the DNA wraps around one UvrB monomer. DNA wrap is dependent on ATP binding by UvrB and probably causes local melting of the DNA helix, facilitating insertion of UvrB beta-hairpin between the DNA strands. Then UvrB probes one DNA strand for the presence of a lesion. If a lesion is found the UvrA subunits dissociate and the UvrB-DNA preincision complex is formed. This complex is subsequently bound by UvrC and the second UvrB is released. If no lesion is found, the DNA wraps around the other UvrB subunit that will check the other stand for damage. This chain is UvrABC system protein B, found in Photorhabdus laumondii subsp. laumondii (strain DSM 15139 / CIP 105565 / TT01) (Photorhabdus luminescens subsp. laumondii).